The chain runs to 185 residues: C-type lectin domain family 5 member A (185 aa).

Topologically, residues 1–4 (MNWH) are cytoplasmic. Residues 5–27 (MIISGLIVVVLKIVGMTFFLLYF) traverse the membrane as a helical; Signal-anchor for type II membrane protein segment. The Extracellular portion of the chain corresponds to 28-185 (PQIFGEHNVS…YRSICEKSAQ (158 aa)). N-linked (GlcNAc...) asparagine glycosylation is found at Asn35 and Asn55. Cys68 and Cys79 are joined by a disulfide. In terms of domain architecture, C-type lectin spans 75–181 (HQGRCFFLST…CDVNYRSICE (107 aa)). Residues Asn90, Asn117, Asn141, and Asn146 are each glycosylated (N-linked (GlcNAc...) asparagine). 2 cysteine pairs are disulfide-bonded: Cys96-Cys180 and Cys158-Cys172.

Monomer. Homodimer. The majority of CLEC5A is expressed as a monomeric form on macrophages. Interacts with TYROBP/DAP12. The interaction with TYROBP is required for CLEC5 cell surface expression. Interacts with HCST/DAP10. Forms a CLEC5A/TYROBP/HCST trimolecular complex depending almost solely on TYROBP. In terms of processing, N-glycosylated. Contains sialic acid residues. In terms of tissue distribution, constitutively expressed in monocytes and macrophages.

Its subcellular location is the cell membrane. Functionally, functions as a positive regulator of osteoclastogenesis. Cell surface receptor that signals via TYROBP. Regulates inflammatory responses. This Sus scrofa (Pig) protein is C-type lectin domain family 5 member A (CLEC5A).